We begin with the raw amino-acid sequence, 107 residues long: Small ribosomal subunit protein uS17 (107 aa).

It belongs to the universal ribosomal protein uS17 family. Part of the 30S ribosomal subunit.

In terms of biological role, one of the primary rRNA binding proteins, it binds specifically to the 5'-end of 16S ribosomal RNA. This chain is Small ribosomal subunit protein uS17, found in Thermotoga petrophila (strain ATCC BAA-488 / DSM 13995 / JCM 10881 / RKU-1).